The sequence spans 191 residues: GTP cyclohydrolase 1 (191 aa).

Residues cysteine 80, histidine 83, and cysteine 151 each contribute to the Zn(2+) site.

The protein belongs to the GTP cyclohydrolase I family. Toroid-shaped homodecamer, composed of two pentamers of five dimers.

The enzyme catalyses GTP + H2O = 7,8-dihydroneopterin 3'-triphosphate + formate + H(+). It functions in the pathway cofactor biosynthesis; 7,8-dihydroneopterin triphosphate biosynthesis; 7,8-dihydroneopterin triphosphate from GTP: step 1/1. The polypeptide is GTP cyclohydrolase 1 (Nitrosospira multiformis (strain ATCC 25196 / NCIMB 11849 / C 71)).